Reading from the N-terminus, the 299-residue chain is Oxygen-dependent coproporphyrinogen-III oxidase (299 aa).

Ser-92 lines the substrate pocket. Positions 96 and 106 each coordinate Mn(2+). His-106 (proton donor) is an active-site residue. 108–110 (NVR) lines the substrate pocket. Positions 145 and 175 each coordinate Mn(2+). The important for dimerization stretch occupies residues 240-275 (YVEFNLVWDRGTLFGLQTGGRTESILMSMPPLVRWE). 258–260 (GGR) lines the substrate pocket.

Belongs to the aerobic coproporphyrinogen-III oxidase family. In terms of assembly, homodimer. It depends on Mn(2+) as a cofactor.

It localises to the cytoplasm. The enzyme catalyses coproporphyrinogen III + O2 + 2 H(+) = protoporphyrinogen IX + 2 CO2 + 2 H2O. The protein operates within porphyrin-containing compound metabolism; protoporphyrin-IX biosynthesis; protoporphyrinogen-IX from coproporphyrinogen-III (O2 route): step 1/1. Involved in the heme biosynthesis. Catalyzes the aerobic oxidative decarboxylation of propionate groups of rings A and B of coproporphyrinogen-III to yield the vinyl groups in protoporphyrinogen-IX. The protein is Oxygen-dependent coproporphyrinogen-III oxidase of Escherichia coli O17:K52:H18 (strain UMN026 / ExPEC).